A 294-amino-acid polypeptide reads, in one-letter code: Lipoyl synthase (294 aa).

Residues Cys-35, Cys-40, Cys-46, Cys-61, Cys-65, Cys-68, and Ser-273 each contribute to the [4Fe-4S] cluster site. Residues 47–262 (FRQRQATFLI…REQALSMGFE (216 aa)) enclose the Radical SAM core domain.

It belongs to the radical SAM superfamily. Lipoyl synthase family. It depends on [4Fe-4S] cluster as a cofactor.

It localises to the cytoplasm. It carries out the reaction [[Fe-S] cluster scaffold protein carrying a second [4Fe-4S](2+) cluster] + N(6)-octanoyl-L-lysyl-[protein] + 2 oxidized [2Fe-2S]-[ferredoxin] + 2 S-adenosyl-L-methionine + 4 H(+) = [[Fe-S] cluster scaffold protein] + N(6)-[(R)-dihydrolipoyl]-L-lysyl-[protein] + 4 Fe(3+) + 2 hydrogen sulfide + 2 5'-deoxyadenosine + 2 L-methionine + 2 reduced [2Fe-2S]-[ferredoxin]. It functions in the pathway protein modification; protein lipoylation via endogenous pathway; protein N(6)-(lipoyl)lysine from octanoyl-[acyl-carrier-protein]: step 2/2. In terms of biological role, catalyzes the radical-mediated insertion of two sulfur atoms into the C-6 and C-8 positions of the octanoyl moiety bound to the lipoyl domains of lipoate-dependent enzymes, thereby converting the octanoylated domains into lipoylated derivatives. The polypeptide is Lipoyl synthase (Geotalea daltonii (strain DSM 22248 / JCM 15807 / FRC-32) (Geobacter daltonii)).